The chain runs to 327 residues: Malate dehydrogenase 1 (327 aa).

12-18 contributes to the NAD(+) binding site; that stretch reads GAAGQIA. Substrate is bound by residues R93 and R99. NAD(+) is bound by residues N106, Q113, and 130–132; that span reads VGN. Positions 132 and 163 each coordinate substrate. H188 serves as the catalytic Proton acceptor.

Belongs to the LDH/MDH superfamily. MDH type 2 family.

The catalysed reaction is (S)-malate + NAD(+) = oxaloacetate + NADH + H(+). Its function is as follows. Catalyzes the reversible oxidation of malate to oxaloacetate. In Burkholderia thailandensis (strain ATCC 700388 / DSM 13276 / CCUG 48851 / CIP 106301 / E264), this protein is Malate dehydrogenase 1.